The primary structure comprises 389 residues: Succinate--CoA ligase [ADP-forming] subunit beta (389 aa).

The ATP-grasp domain maps to 9–246 (KEILRRHNAN…ITEEDPYEVK (238 aa)). ATP is bound by residues lysine 48, 55-57 (GRG), glutamate 101, leucine 104, and glutamate 109. 2 residues coordinate Mg(2+): asparagine 201 and aspartate 215. Substrate contacts are provided by residues asparagine 266 and 323–325 (GIV).

This sequence belongs to the succinate/malate CoA ligase beta subunit family. In terms of assembly, heterotetramer of two alpha and two beta subunits. Mg(2+) serves as cofactor.

It carries out the reaction succinate + ATP + CoA = succinyl-CoA + ADP + phosphate. It catalyses the reaction GTP + succinate + CoA = succinyl-CoA + GDP + phosphate. The protein operates within carbohydrate metabolism; tricarboxylic acid cycle; succinate from succinyl-CoA (ligase route): step 1/1. In terms of biological role, succinyl-CoA synthetase functions in the citric acid cycle (TCA), coupling the hydrolysis of succinyl-CoA to the synthesis of either ATP or GTP and thus represents the only step of substrate-level phosphorylation in the TCA. The beta subunit provides nucleotide specificity of the enzyme and binds the substrate succinate, while the binding sites for coenzyme A and phosphate are found in the alpha subunit. This chain is Succinate--CoA ligase [ADP-forming] subunit beta, found in Leptospira biflexa serovar Patoc (strain Patoc 1 / Ames).